The primary structure comprises 157 residues: Cytochrome c-type biogenesis protein CcmE (157 aa).

The Cytoplasmic segment spans residues 1–8; it reads MNPLRRKR. Residues 9–29 form a helical; Signal-anchor for type II membrane protein membrane-spanning segment; the sequence is LLIILAVLGGVGLALTLALSA. Residues 30-157 are Periplasmic-facing; the sequence is LKENINLFYT…ASMPARQADR (128 aa). Residues H124 and Y128 each coordinate heme. Residues 132–157 form a disordered region; sequence EVSKALRESGQATPAPASMPARQADR.

Belongs to the CcmE/CycJ family.

Its subcellular location is the cell inner membrane. Heme chaperone required for the biogenesis of c-type cytochromes. Transiently binds heme delivered by CcmC and transfers the heme to apo-cytochromes in a process facilitated by CcmF and CcmH. This Pseudomonas syringae pv. tomato (strain ATCC BAA-871 / DC3000) protein is Cytochrome c-type biogenesis protein CcmE.